An 876-amino-acid chain; its full sequence is Alanine--tRNA ligase (876 aa).

Residues His-560, His-564, Cys-662, and His-666 each contribute to the Zn(2+) site.

This sequence belongs to the class-II aminoacyl-tRNA synthetase family. Zn(2+) is required as a cofactor.

It is found in the cytoplasm. It catalyses the reaction tRNA(Ala) + L-alanine + ATP = L-alanyl-tRNA(Ala) + AMP + diphosphate. Catalyzes the attachment of alanine to tRNA(Ala) in a two-step reaction: alanine is first activated by ATP to form Ala-AMP and then transferred to the acceptor end of tRNA(Ala). Also edits incorrectly charged Ser-tRNA(Ala) and Gly-tRNA(Ala) via its editing domain. In Synechococcus sp. (strain ATCC 27144 / PCC 6301 / SAUG 1402/1) (Anacystis nidulans), this protein is Alanine--tRNA ligase.